A 305-amino-acid polypeptide reads, in one-letter code: tRNA pseudouridine synthase B (305 aa).

D48 functions as the Nucleophile in the catalytic mechanism.

The protein belongs to the pseudouridine synthase TruB family. Type 1 subfamily.

The enzyme catalyses uridine(55) in tRNA = pseudouridine(55) in tRNA. Its function is as follows. Responsible for synthesis of pseudouridine from uracil-55 in the psi GC loop of transfer RNAs. The chain is tRNA pseudouridine synthase B from Mannheimia succiniciproducens (strain KCTC 0769BP / MBEL55E).